The chain runs to 356 residues: 1-deoxy-D-xylulose 5-phosphate reductoisomerase (356 aa).

NADPH-binding residues include threonine 7, glycine 8, serine 9, isoleucine 10, glycine 31, asparagine 33, and asparagine 111. Lysine 112 is a binding site for 1-deoxy-D-xylulose 5-phosphate. Glutamate 113 provides a ligand contact to NADPH. Aspartate 131 provides a ligand contact to Mn(2+). Positions 132, 133, 155, and 178 each coordinate 1-deoxy-D-xylulose 5-phosphate. Residue glutamate 133 coordinates Mn(2+). Glycine 184 lines the NADPH pocket. Positions 191, 196, 197, and 200 each coordinate 1-deoxy-D-xylulose 5-phosphate. A Mn(2+)-binding site is contributed by glutamate 200.

It belongs to the DXR family. It depends on Mg(2+) as a cofactor. Mn(2+) is required as a cofactor.

It catalyses the reaction 2-C-methyl-D-erythritol 4-phosphate + NADP(+) = 1-deoxy-D-xylulose 5-phosphate + NADPH + H(+). It functions in the pathway isoprenoid biosynthesis; isopentenyl diphosphate biosynthesis via DXP pathway; isopentenyl diphosphate from 1-deoxy-D-xylulose 5-phosphate: step 1/6. In terms of biological role, catalyzes the NADPH-dependent rearrangement and reduction of 1-deoxy-D-xylulose-5-phosphate (DXP) to 2-C-methyl-D-erythritol 4-phosphate (MEP). This is 1-deoxy-D-xylulose 5-phosphate reductoisomerase from Campylobacter jejuni (strain RM1221).